The chain runs to 161 residues: UPF0178 protein PXO_00400 (161 aa).

It belongs to the UPF0178 family.

This is UPF0178 protein PXO_00400 from Xanthomonas oryzae pv. oryzae (strain PXO99A).